A 51-amino-acid polypeptide reads, in one-letter code: Large ribosomal subunit protein eL39 (51 aa).

It belongs to the eukaryotic ribosomal protein eL39 family.

In Methanosarcina barkeri (strain Fusaro / DSM 804), this protein is Large ribosomal subunit protein eL39.